The primary structure comprises 381 residues: Molybdenum import ATP-binding protein ModC (381 aa).

The 234-residue stretch at 5 to 238 (SRSIQAQFRG…PALPLAASRD (234 aa)) folds into the ABC transporter domain. 37-44 (GPSGCGKS) contributes to the ATP binding site. Residues 297-367 (NTSILNVLPA…VKGVALAPGR (71 aa)) form the Mop domain.

It belongs to the ABC transporter superfamily. Molybdate importer (TC 3.A.1.8) family. As to quaternary structure, the complex is composed of two ATP-binding proteins (ModC), two transmembrane proteins (ModB) and a solute-binding protein (ModA).

Its subcellular location is the cell inner membrane. The enzyme catalyses molybdate(out) + ATP + H2O = molybdate(in) + ADP + phosphate + H(+). Functionally, part of the ABC transporter complex ModABC involved in molybdenum import. Responsible for energy coupling to the transport system. This is Molybdenum import ATP-binding protein ModC from Rhodopseudomonas palustris (strain BisB18).